A 488-amino-acid chain; its full sequence is Replication-associated protein (488 aa).

A disordered region spans residues 462–488 (PRPRQMQRSATEHNLFQYARSGRDPTS).

Its subcellular location is the host nucleus. Functionally, plays an essential for the replication of viral DNA. Presumably cleaves viral genomic dsRNA replicative form to initiate rolling circle replication. This Chaetoceros diatodnavirus 1 (Chaetoceros setoense DNA virus) protein is Replication-associated protein.